The primary structure comprises 366 residues: 1-aminocyclopropane-1-carboxylate oxidase homolog 12 (366 aa).

Positions 215-314 (KTLLMICHYY…RISVASFFSS (100 aa)) constitute a Fe2OG dioxygenase domain. Fe cation is bound by residues histidine 239, aspartate 241, and histidine 295. Arginine 305 is a binding site for 2-oxoglutarate.

Belongs to the iron/ascorbate-dependent oxidoreductase family. Fe(2+) is required as a cofactor.

The sequence is that of 1-aminocyclopropane-1-carboxylate oxidase homolog 12 from Arabidopsis thaliana (Mouse-ear cress).